A 267-amino-acid polypeptide reads, in one-letter code: Phosphoethanolamine/phosphocholine phosphatase (267 aa).

Residue Asp-32 is the Nucleophile of the active site. The Mg(2+) site is built by Asp-32 and Asp-34. Asp-34 functions as the Proton donor in the catalytic mechanism. The substrate site is built by Asp-43 and Asp-123. A Mg(2+)-binding site is contributed by Asp-203.

The protein belongs to the HAD-like hydrolase superfamily. PHOSPHO family. The cofactor is Mg(2+). Expressed at sites of mineralization in bone and cartilage. Highly expressed in osteoblast cell line SaOS-2 which produces a mineralized matrix, but not in MG-63 cell line, which do not mineralize.

The protein localises to the extracellular vesicle. The catalysed reaction is phosphoethanolamine + H2O = ethanolamine + phosphate. The enzyme catalyses phosphocholine + H2O = choline + phosphate. Its function is as follows. Phosphatase that has a high activity toward phosphoethanolamine (PEA) and phosphocholine (PCho). Involved in the generation of inorganic phosphate for bone mineralization. Acts in a non-redundant manner with PHOSPHO1 in skeletal mineralization: while PHOSPHO1 mediates the initiation of hydroxyapatite crystallization in the matrix vesicles (MVs), ALPL/TNAP catalyzes the spread of hydroxyapatite crystallization in the extracellular matrix. In Homo sapiens (Human), this protein is Phosphoethanolamine/phosphocholine phosphatase.